We begin with the raw amino-acid sequence, 840 residues long: Heat shock 70 kDa protein 4 (840 aa).

Position 53 is an N6-acetyllysine (lysine 53). At serine 76 the chain carries Phosphoserine. Phosphotyrosine is present on residues tyrosine 89 and tyrosine 336. Residues serine 393 and serine 415 each carry the phosphoserine modification. Residue lysine 430 is modified to N6-acetyllysine. The segment at 500-575 (VHKSEESEEP…QAKKAKVKTS (76 aa)) is disordered. Residues 514-533 (QNAKEEEKMQVDQEEPHTEE) show a composition bias toward basic and acidic residues. Threonine 538 is subject to Phosphothreonine. Serine 546 carries the post-translational modification Phosphoserine. The residue at position 660 (tyrosine 660) is a Phosphotyrosine. Serine 756 carries the phosphoserine modification. Lysine 773 is modified (N6-methyllysine). The tract at residues 781-840 (PIISKPKPKVEPPKEEPKHAEQNGPVDGQGDNPGTQAAEHGADTAVPSDGDKKLPEMDID) is disordered. Basic and acidic residues-rich tracts occupy residues 788–801 (PKVE…KHAE) and 829–840 (DGDKKLPEMDID).

The protein belongs to the heat shock protein 70 family. In terms of assembly, interacts with TJP1/ZO-1. In terms of tissue distribution, ubiquitous. Highly expressed in testis.

The protein localises to the cytoplasm. In Rattus norvegicus (Rat), this protein is Heat shock 70 kDa protein 4 (Hspa4).